Here is a 562-residue protein sequence, read N- to C-terminus: Probable sesquiterpene synthase (562 aa).

The Mg(2+) site is built by D315, D319, and E467. The DDXXD motif motif lies at 315-319 (DDIYD).

The protein belongs to the terpene synthase family. Tpsa subfamily. It depends on Mg(2+) as a cofactor. The cofactor is Mn(2+).

Its function is as follows. Sesquiterpene synthase. The protein is Probable sesquiterpene synthase (SesquiTPS) of Santalum spicatum (Australian sandalwood).